The primary structure comprises 1627 residues: Pappalysin-1 (1627 aa).

The N-terminal stretch at 1-22 is a signal peptide; the sequence is MRLWSWVLHLGLLSAALGCGLA. Positions 23 to 81 are excised as a propeptide; the sequence is ERPRRARRDPRAGRPPRPAAGPATCATRAARGRRASPPPPPPPGGAWEAVRVPRRRQQR. The tract at residues 23–99 is disordered; the sequence is ERPRRARRDP…PSPPSRALYF (77 aa). Residues 42-51 show a composition bias toward low complexity; that stretch reads AGPATCATRA. 17 disulfides stabilise this stretch: cysteine 144–cysteine 235, cysteine 327–cysteine 622, cysteine 332–cysteine 657, cysteine 414–cysteine 428, cysteine 424–cysteine 440, cysteine 457–cysteine 473, cysteine 474–cysteine 485, cysteine 583–cysteine 600, cysteine 587–cysteine 612, cysteine 710–cysteine 878, cysteine 713–cysteine 881, cysteine 753–cysteine 835, cysteine 775–cysteine 781, cysteine 947–cysteine 975, cysteine 960–cysteine 971, cysteine 983–cysteine 990, and cysteine 999–cysteine 1011. Residues 272–583 are metalloprotease; sequence METHGAHTAL…FRGISEIQSC (312 aa). 2 N-linked (GlcNAc...) asparagine glycosylation sites follow: asparagine 390 and asparagine 402. A glycan (N-linked (GlcNAc...) asparagine) is linked at asparagine 429. Asparagine 480 carries N-linked (GlcNAc...) asparagine glycosylation. Histidine 562 is a Zn(2+) binding site. Glutamate 563 is a catalytic residue. Positions 566 and 572 each coordinate Zn(2+). N-linked (GlcNAc...) asparagine glycans are attached at residues asparagine 601, asparagine 619, and asparagine 725. The segment at 733–754 is disordered; the sequence is SPSGHWSPREAEGHPDVEQPCK. Residues 739-751 show a composition bias toward basic and acidic residues; it reads SPREAEGHPDVEQ. N-linked (GlcNAc...) asparagine glycosylation is present at asparagine 825. The N-linked (GlcNAc...) asparagine glycan is linked to asparagine 1026. 19 cysteine pairs are disulfide-bonded: cysteine 1036–cysteine 1070, cysteine 1051–cysteine 1139, cysteine 1192–cysteine 1205, cysteine 1215–cysteine 1269, cysteine 1227–cysteine 1238, cysteine 1242–cysteine 1280, cysteine 1285–cysteine 1329, cysteine 1300–cysteine 1310, cysteine 1314–cysteine 1342, cysteine 1346–cysteine 1399, cysteine 1362–cysteine 1373, cysteine 1377–cysteine 1410, cysteine 1415–cysteine 1458, cysteine 1428–cysteine 1438, cysteine 1442–cysteine 1471, cysteine 1478–cysteine 1539, cysteine 1492–cysteine 1502, cysteine 1506–cysteine 1554, and cysteine 1558–cysteine 1576. Sushi domains lie at 1213-1282, 1283-1344, 1345-1412, 1413-1473, and 1476-1556; these read TDCP…ACEP, VDCS…LCEL, MCLA…ACVP, VTCD…VCQE, and GQCS…HCVK. Residues asparagine 1222 and asparagine 1226 are each glycosylated (N-linked (GlcNAc...) asparagine). An N-linked (GlcNAc...) asparagine glycan is attached at asparagine 1323. N-linked (GlcNAc...) asparagine glycosylation occurs at asparagine 1465. Residue asparagine 1519 is glycosylated (N-linked (GlcNAc...) asparagine).

The protein belongs to the peptidase M43B family. Homodimer; disulfide-linked. In pregnancy serum, predominantly found as a disulfide-linked 2:2 heterotetramer with the proform of PRG2. Requires Zn(2+) as cofactor. Post-translationally, there appear to be no free sulfhydryl groups. In terms of tissue distribution, high levels in placenta and pregnancy serum. In placenta, expressed in X cells in septa and anchoring villi, and in syncytiotrophoblasts in the chorionic villi. Lower levels are found in a variety of other tissues including kidney, myometrium, endometrium, ovaries, breast, prostate, bone marrow, colon, fibroblasts and osteoblasts.

It is found in the secreted. It carries out the reaction Cleavage of the 135-Met-|-Lys-136 bond in insulin-like growth factor binding protein (IGFBP)-4, and the 143-Ser-|-Lys-144 bond in IGFBP-5.. Its activity is regulated as follows. Inhibited by complexation with the proform of PRG2. Metalloproteinase which specifically cleaves IGFBP-4 and IGFBP-5, resulting in release of bound IGF. Cleavage of IGFBP-4 is dramatically enhanced by the presence of IGF, whereas cleavage of IGFBP-5 is slightly inhibited by the presence of IGF. This Homo sapiens (Human) protein is Pappalysin-1 (PAPPA).